The following is a 367-amino-acid chain: Dihydroxyacetone phosphate transaminase Cj1437c (367 aa).

Lysine 219 is subject to N6-(pyridoxal phosphate)lysine.

This sequence belongs to the class-II pyridoxal-phosphate-dependent aminotransferase family. Pyridoxal 5'-phosphate serves as cofactor.

It catalyses the reaction dihydroxyacetone phosphate + L-glutamate = (S)-serinol phosphate + 2-oxoglutarate. Its pathway is capsule biogenesis; capsule polysaccharide biosynthesis. Its function is as follows. Pyridoxal phosphate (PLP)-dependent transaminase involved in the biosynthesis of amidated D-glucuronic acid structures found on the capsular polysaccharide (CPS) of C.jejuni. Catalyzes the transamination of dihydroxyacetone phosphate (DHAP) to (S)-serinol phosphate in the presence of L-glutamate. Less active with L-aspartate. No activity with dihydroxyacetone or L-alanine. This is Dihydroxyacetone phosphate transaminase Cj1437c from Campylobacter jejuni subsp. jejuni serotype O:2 (strain ATCC 700819 / NCTC 11168).